The primary structure comprises 232 residues: MNKYLAEAFGTFWLVLGGCGSAVLAAGFPDVGIGLLGVALAFGLTVLTMAFAIGHISGCHLNPAVTVGLWAGGRFDTKDVAPYIIAQVIGGLIAGGILYVIATGQAGFDVVGSGFAANGYGEHSPGQYSMLAALVSEIVMTMMFLIVIMGATDKRAPQGFAPIAIGLCLTLIHLISIPVTNTSVNPARSTAVAMYVGDWAVSQLWLFWVAPIVGGVLGAVIYKNLLGKESND.

The next 2 membrane-spanning stretches (helical) occupy residues 8–28 (AFGT…AAGF) and 33–53 (IGLL…AFAI). Residues 62 to 64 (NPA) carry the NPA 1 motif. The next 3 helical transmembrane spans lie at 84–104 (IIAQ…IATG), 130–150 (MLAA…VIMG), and 159–179 (GFAP…SIPV). The NPA 2 signature appears at 185 to 187 (NPA). Residues 201–221 (VSQLWLFWVAPIVGGVLGAVI) traverse the membrane as a helical segment.

The protein belongs to the MIP/aquaporin (TC 1.A.8) family. Homotetramer.

It localises to the cell inner membrane. The catalysed reaction is H2O(in) = H2O(out). Channel that permits osmotically driven movement of water in both directions. It is involved in the osmoregulation and in the maintenance of cell turgor during volume expansion in rapidly growing cells. It mediates rapid entry or exit of water in response to abrupt changes in osmolarity. This chain is Aquaporin Z, found in Vibrio parahaemolyticus serotype O3:K6 (strain RIMD 2210633).